A 704-amino-acid chain; its full sequence is MTDTVFSSSSSRWMCPSDRPLQSNDKEQLQTGWSVHPSGQPDRQRKQEELTDEEKEIINRVIARAEKMEEMEQERIGRLVDRLENMRKNVAGDGVNRCILCGEQLGMLGSACVVCEDCKKNVCTKCGVETSNNRPHPVWLCKICIEQREVWKRSGAWFFKGFPKQVLPQPMPIKKNKPQQPVSEPVPAAPEPATPEPKHPARAPTRGDTEDRRGPGQKTGPDMTSAPGRGSYGPPVRRASEARMSSSGRDSDSWDQGHGMAAGDPSQSPAGLRRANSVQASRPAPASMQSPAPPQPGQPGPPGGSRPSPGPTGRFPDQRPEVAPSDPDYTGAAAQPREERTGGIGGYSAAGTREDRAGHPPGSYTQASAAAPQPVVASARQPPPPEEDEEEANSYDSDEATTLGALEFSLLYDQDNSSLHCTIIKAKGLKPMDSNGLADPYVKLHLLPGASKSNKLRTKTLRNTRNPIWNETLVYHGITDEDMQRKTLRISVCDEDKFGHNEFIGETRFSLKKLKPNQRKNFNICLERVIPMKRAGTTGSARGMALYEEEQVERIGDIEERGKILVSLMYSTQQGGLIVGIIRCVHLAAMDANGYSDPFVKLWLKPDMGKKAKHKTQIKKKTLNPEFNEEFFYDIKHSDLAKKSLDISVWDYDIGKSNDYIGGCQLGISAKGERLKHWYECLKNKDKKIERWHQLQNENHVSSD.

The span at 1-12 (MTDTVFSSSSSR) shows a compositional bias: polar residues. A disordered region spans residues 1 to 52 (MTDTVFSSSSSRWMCPSDRPLQSNDKEQLQTGWSVHPSGQPDRQRKQEELTD). Positions 44-161 (QRKQEELTDE…KRSGAWFFKG (118 aa)) constitute a RabBD domain. An FYVE-type zinc finger spans residues 92–149 (GDGVNRCILCGEQLGMLGSACVVCEDCKKNVCTKCGVETSNNRPHPVWLCKICIEQRE). Cys98, Cys101, Cys115, Cys118, Cys123, Cys126, Cys141, and Cys144 together coordinate Zn(2+). The tract at residues 167–398 (LPQPMPIKKN…EEEANSYDSD (232 aa)) is disordered. Basic and acidic residues predominate over residues 205–214 (TRGDTEDRRG). An Omega-N-methylarginine modification is found at Arg229. A Phosphoserine modification is found at Ser277. Positions 279-290 (QASRPAPASMQS) are enriched in low complexity. The segment covering 291–310 (PAPPQPGQPGPPGGSRPSPG) has biased composition (pro residues). Positions 366 to 380 (QASAAAPQPVVASAR) are enriched in low complexity. Residues 385–398 (PEEDEEEANSYDSD) show a composition bias toward acidic residues. The region spanning 402-524 (TLGALEFSLL…KPNQRKNFNI (123 aa)) is the C2 1 domain. The Ca(2+) site is built by Met432, Asp433, Asp439, Asp494, Glu495, Asp496, Glu502, Glu549, Asp591, Asp597, Asp651, Tyr652, Asp653, and Asp659. The C2 2 domain occupies 560–693 (ERGKILVSLM…NKDKKIERWH (134 aa)). Phosphoserine occurs at positions 702 and 703.

Interacts with RAB3B, RAB3C, RAB3D, RAB8A, RAB27A and RAB27B. Interacts with RAB3A; this interaction recruits RPH3A to synaptic vesicules. Interacts (via C2B domain) with SNAP25. Interacts with deubiquitinating enzyme CAND1; this interaction results in the deubiquitination of RPH3A. Interacts with GRIN2A and DLG4; this ternary complex regulates NMDA receptor composition at postsynaptic membranes. Interacts with SNCA. Requires Ca(2+) as cofactor. Post-translationally, ubiquitinated. Deubiquitinated by CAND1 to prevent its degradation. As to expression, specifically expressed in brain.

The protein localises to the cytoplasmic vesicle. Its subcellular location is the secretory vesicle. It is found in the synaptic vesicle membrane. It localises to the cell projection. The protein resides in the dendritic spine. The protein localises to the postsynaptic cell membrane. Its subcellular location is the membrane. Functionally, plays an essential role in docking and fusion steps of regulated exocytosis. At the presynaptic level, RPH3A is recruited by RAB3A to the synaptic vesicle membrane in a GTP-dependent manner where it modulates synaptic vesicle trafficking and calcium-triggered neurotransmitter release. In the post-synaptic compartment, forms a ternary complex with GRIN2A and DLG4 and regulates NMDA receptor stability. Also plays a role in the exocytosis of arginine vasopressin hormone. This is Rabphilin-3A (RPH3A) from Bos taurus (Bovine).